A 363-amino-acid chain; its full sequence is tRNA (guanine(26)-N(2))-dimethyltransferase (363 aa).

The 348-residue stretch at 5-352 folds into the Trm1 methyltransferase domain; it reads VLRREGGVKF…GEYGEVLMAF (348 aa). 5 residues coordinate S-adenosyl-L-methionine: Arg40, Arg67, Asp85, Asp111, and Ala112.

It belongs to the class I-like SAM-binding methyltransferase superfamily. Trm1 family.

The catalysed reaction is guanosine(26) in tRNA + 2 S-adenosyl-L-methionine = N(2)-dimethylguanosine(26) in tRNA + 2 S-adenosyl-L-homocysteine + 2 H(+). Functionally, dimethylates a single guanine residue at position 26 of a number of tRNAs using S-adenosyl-L-methionine as donor of the methyl groups. This chain is tRNA (guanine(26)-N(2))-dimethyltransferase, found in Pyrobaculum aerophilum (strain ATCC 51768 / DSM 7523 / JCM 9630 / CIP 104966 / NBRC 100827 / IM2).